We begin with the raw amino-acid sequence, 250 residues long: Flagellar L-ring protein (250 aa).

The N-terminal stretch at 1-32 (MTRINTNTQKNNNTKFSKLILGVMVSSIVLSG) is a signal peptide. C33 is lipidated: N-palmitoyl cysteine. The S-diacylglycerol cysteine moiety is linked to residue C33.

This sequence belongs to the FlgH family. As to quaternary structure, the basal body constitutes a major portion of the flagellar organelle and consists of four rings (L,P,S, and M) mounted on a central rod.

The protein resides in the cell outer membrane. The protein localises to the bacterial flagellum basal body. In terms of biological role, assembles around the rod to form the L-ring and probably protects the motor/basal body from shearing forces during rotation. In Hydrogenovibrio crunogenus (strain DSM 25203 / XCL-2) (Thiomicrospira crunogena), this protein is Flagellar L-ring protein.